A 348-amino-acid polypeptide reads, in one-letter code: Probable dual-specificity RNA methyltransferase RlmN (348 aa).

Glu-89 acts as the Proton acceptor in catalysis. The region spanning 95 to 328 (HKNRNTVCVS…VTLRISYGSK (234 aa)) is the Radical SAM core domain. A disulfide bridge links Cys-102 with Cys-333. [4Fe-4S] cluster-binding residues include Cys-109, Cys-113, and Cys-116. S-adenosyl-L-methionine contacts are provided by residues 159–160 (GE), Ser-191, 214–216 (SLH), and Asn-290. Catalysis depends on Cys-333, which acts as the S-methylcysteine intermediate.

The protein belongs to the radical SAM superfamily. RlmN family. Requires [4Fe-4S] cluster as cofactor.

The protein resides in the cytoplasm. It carries out the reaction adenosine(2503) in 23S rRNA + 2 reduced [2Fe-2S]-[ferredoxin] + 2 S-adenosyl-L-methionine = 2-methyladenosine(2503) in 23S rRNA + 5'-deoxyadenosine + L-methionine + 2 oxidized [2Fe-2S]-[ferredoxin] + S-adenosyl-L-homocysteine. The enzyme catalyses adenosine(37) in tRNA + 2 reduced [2Fe-2S]-[ferredoxin] + 2 S-adenosyl-L-methionine = 2-methyladenosine(37) in tRNA + 5'-deoxyadenosine + L-methionine + 2 oxidized [2Fe-2S]-[ferredoxin] + S-adenosyl-L-homocysteine. Functionally, specifically methylates position 2 of adenine 2503 in 23S rRNA and position 2 of adenine 37 in tRNAs. This chain is Probable dual-specificity RNA methyltransferase RlmN, found in Dictyoglomus turgidum (strain DSM 6724 / Z-1310).